The primary structure comprises 355 residues: Uroporphyrinogen decarboxylase (355 aa).

Substrate-binding positions include 36 to 40 (RQAGR), Asp-85, Tyr-160, Ser-215, and His-334.

It belongs to the uroporphyrinogen decarboxylase family. Homodimer.

It localises to the cytoplasm. The catalysed reaction is uroporphyrinogen III + 4 H(+) = coproporphyrinogen III + 4 CO2. It participates in porphyrin-containing compound metabolism; protoporphyrin-IX biosynthesis; coproporphyrinogen-III from 5-aminolevulinate: step 4/4. Catalyzes the decarboxylation of four acetate groups of uroporphyrinogen-III to yield coproporphyrinogen-III. The chain is Uroporphyrinogen decarboxylase from Rhodococcus jostii (strain RHA1).